Reading from the N-terminus, the 339-residue chain is Anthranilate phosphoribosyltransferase (339 aa).

5-phospho-alpha-D-ribose 1-diphosphate is bound by residues Gly80, 83–84 (GD), 90–93 (NVST), 108–116 (KHGNRSVTS), and Ser120. Gly80 contacts anthranilate. Ser92 provides a ligand contact to Mg(2+). Asn111 contacts anthranilate. Arg166 contributes to the anthranilate binding site. Residues Asp225 and Glu226 each coordinate Mg(2+).

This sequence belongs to the anthranilate phosphoribosyltransferase family. As to quaternary structure, homodimer. Mg(2+) is required as a cofactor.

The enzyme catalyses N-(5-phospho-beta-D-ribosyl)anthranilate + diphosphate = 5-phospho-alpha-D-ribose 1-diphosphate + anthranilate. The protein operates within amino-acid biosynthesis; L-tryptophan biosynthesis; L-tryptophan from chorismate: step 2/5. Functionally, catalyzes the transfer of the phosphoribosyl group of 5-phosphorylribose-1-pyrophosphate (PRPP) to anthranilate to yield N-(5'-phosphoribosyl)-anthranilate (PRA). This is Anthranilate phosphoribosyltransferase from Ignicoccus hospitalis (strain KIN4/I / DSM 18386 / JCM 14125).